A 144-amino-acid chain; its full sequence is MLDAQQIQDIIPHRYPFLLVDRILEVEGEKRAVGIKNVTVNEEFFNGHFPGYPVMPGVLIVEALAQVFGVIMLGKEENKGKIGLFAGIDGCRFKRQVKPGDQLRLEVEVTRLRGPVAKGKAVATVDGEVACEAELTFSIGPKVS.

The active site involves His-48.

This sequence belongs to the thioester dehydratase family. FabZ subfamily.

It is found in the cytoplasm. It catalyses the reaction a (3R)-hydroxyacyl-[ACP] = a (2E)-enoyl-[ACP] + H2O. Functionally, involved in unsaturated fatty acids biosynthesis. Catalyzes the dehydration of short chain beta-hydroxyacyl-ACPs and long chain saturated and unsaturated beta-hydroxyacyl-ACPs. The polypeptide is 3-hydroxyacyl-[acyl-carrier-protein] dehydratase FabZ (Bacillus pumilus (strain SAFR-032)).